The sequence spans 267 residues: Small ribosomal subunit protein uS3 (267 aa).

Positions 43–111 (IRKEMSKDLE…QVQLNIFEVK (69 aa)) constitute a KH type-2 domain. The segment at 216-267 (FEEQQAQQNNRPGRRGGDRRPRRGNRSAAPQAAEAPKAEAPAEAAPAAETKE) is disordered. Over residues 241–267 (RSAAPQAAEAPKAEAPAEAAPAAETKE) the composition is skewed to low complexity.

This sequence belongs to the universal ribosomal protein uS3 family. As to quaternary structure, part of the 30S ribosomal subunit. Forms a tight complex with proteins S10 and S14.

Functionally, binds the lower part of the 30S subunit head. Binds mRNA in the 70S ribosome, positioning it for translation. The sequence is that of Small ribosomal subunit protein uS3 from Bifidobacterium longum (strain DJO10A).